The chain runs to 687 residues: Glycine--tRNA ligase beta subunit (687 aa).

The protein belongs to the class-II aminoacyl-tRNA synthetase family. In terms of assembly, tetramer of two alpha and two beta subunits.

It localises to the cytoplasm. The enzyme catalyses tRNA(Gly) + glycine + ATP = glycyl-tRNA(Gly) + AMP + diphosphate. This chain is Glycine--tRNA ligase beta subunit, found in Ruegeria sp. (strain TM1040) (Silicibacter sp.).